A 462-amino-acid polypeptide reads, in one-letter code: Probable acid phosphatase SPBC4.06 (462 aa).

The active-site Nucleophile is the His35. Asp330 functions as the Proton donor in the catalytic mechanism.

This sequence belongs to the histidine acid phosphatase family.

The protein resides in the mitochondrion. It catalyses the reaction a phosphate monoester + H2O = an alcohol + phosphate. In Schizosaccharomyces pombe (strain 972 / ATCC 24843) (Fission yeast), this protein is Probable acid phosphatase SPBC4.06.